A 370-amino-acid chain; its full sequence is MSKPEYFIGLMSGTSMDGVDAVLVDFSQAKPQLIAGHTQAIPKHLLKGLQRLCNPAADEINRLGRLDRAVGSLFADAVNALLEKTNIPKSQIIAIGSHGQTVRHMPNLEVGFTLQIGDPNTIAVETGIDVIADFRRKDIALGGQGAPLVPAFHQQVFAEKDQIRVILNIGGIANVTYLPGNSEQVLGFDTGPGNTLIDAYILQNLEQAFDEDGQWADSGNSNQALLTQMLSHPYFSLHYPKSTGRELFNQAWLEQQLANFSHLDAEDIQSTLLDLTCHSIANDINKLAPKGQLFVCGGGALNGALMKRLTQLVPGYQLQTTSALGVDAKWVEGIAFAWLAMRHHHNLPANLPAVTGASKSAVLGGRYSAK.

13-20 serves as a coordination point for ATP; it reads GTSMDGVD.

Belongs to the anhydro-N-acetylmuramic acid kinase family.

The catalysed reaction is 1,6-anhydro-N-acetyl-beta-muramate + ATP + H2O = N-acetyl-D-muramate 6-phosphate + ADP + H(+). It participates in amino-sugar metabolism; 1,6-anhydro-N-acetylmuramate degradation. Its pathway is cell wall biogenesis; peptidoglycan recycling. In terms of biological role, catalyzes the specific phosphorylation of 1,6-anhydro-N-acetylmuramic acid (anhMurNAc) with the simultaneous cleavage of the 1,6-anhydro ring, generating MurNAc-6-P. Is required for the utilization of anhMurNAc either imported from the medium or derived from its own cell wall murein, and thus plays a role in cell wall recycling. The chain is Anhydro-N-acetylmuramic acid kinase from Shewanella denitrificans (strain OS217 / ATCC BAA-1090 / DSM 15013).